Here is a 226-residue protein sequence, read N- to C-terminus: Triosephosphate isomerase (226 aa).

Histidine 91 (electrophile) is an active-site residue. Glutamate 163 functions as the Proton acceptor in the catalytic mechanism. Residues glycine 169 and serine 207 each coordinate substrate.

This sequence belongs to the triosephosphate isomerase family. As to quaternary structure, homodimer.

It localises to the cytoplasm. It carries out the reaction D-glyceraldehyde 3-phosphate = dihydroxyacetone phosphate. The protein operates within carbohydrate biosynthesis; gluconeogenesis. It participates in carbohydrate degradation; glycolysis; D-glyceraldehyde 3-phosphate from glycerone phosphate: step 1/1. Its function is as follows. Involved in the gluconeogenesis. Catalyzes stereospecifically the conversion of dihydroxyacetone phosphate (DHAP) to D-glyceraldehyde-3-phosphate (G3P). The chain is Triosephosphate isomerase from Rhizobium etli (strain ATCC 51251 / DSM 11541 / JCM 21823 / NBRC 15573 / CFN 42).